The following is a 512-amino-acid chain: Sodium/proline symporter (512 aa).

13 helical membrane passes run 16–36 (WQTYIMIAVYFLILIVIGFYG), 54–74 (IGPYITALSAGASDMSGWMIM), 85–105 (LSAMWITIGLTLGAYINYFVV), 139–159 (IISGLIIVVFFTLYTHSGFVS), 174–194 (FGLILVAFIVIFYTFFGGYLA), 200–220 (FFQGVIMLIAMVMVPIVAMMN), 247–267 (IGIISLFSWGLGYFGQPHIII), 286–306 (ISWMAVGLLGAVAVGLTGIAF), 327–347 (VLFHPLVGGFLLAAILAAIMS), 381–401 (FVMIGRLSVLVVAIVAIAIAW), 410–430 (LVGNAWAGFGASFSPLVLFAL), 438–458 (AGAVSGMVSGALVVIVWIAWI), and 467–487 (IFGLYEIIPGFIVSVIVTYVV).

It belongs to the sodium:solute symporter (SSF) (TC 2.A.21) family.

It localises to the cell membrane. It catalyses the reaction L-proline(in) + Na(+)(in) = L-proline(out) + Na(+)(out). Functionally, catalyzes the sodium-dependent uptake of extracellular L-proline. Since most S.aureus strains are L-proline auxotrophs, this transporter may aid the bacterial persistence during an infection of tissues with low proline concentrations. This Staphylococcus aureus (strain USA300) protein is Sodium/proline symporter (putP).